We begin with the raw amino-acid sequence, 189 residues long: Peptidyl-tRNA hydrolase (189 aa).

Tyr14 lines the tRNA pocket. His19 functions as the Proton acceptor in the catalytic mechanism. Residues Phe64, Asn66, and Asn112 each coordinate tRNA.

It belongs to the PTH family. Monomer.

It localises to the cytoplasm. The catalysed reaction is an N-acyl-L-alpha-aminoacyl-tRNA + H2O = an N-acyl-L-amino acid + a tRNA + H(+). Hydrolyzes ribosome-free peptidyl-tRNAs (with 1 or more amino acids incorporated), which drop off the ribosome during protein synthesis, or as a result of ribosome stalling. In terms of biological role, catalyzes the release of premature peptidyl moieties from peptidyl-tRNA molecules trapped in stalled 50S ribosomal subunits, and thus maintains levels of free tRNAs and 50S ribosomes. The polypeptide is Peptidyl-tRNA hydrolase (Sphingopyxis alaskensis (strain DSM 13593 / LMG 18877 / RB2256) (Sphingomonas alaskensis)).